The chain runs to 348 residues: uncharacterized protein (348 aa).

2 residues coordinate NADP(+): Lys-41 and Tyr-170. The residue at position 339 (Ser-339) is a Phosphoserine.

Belongs to the NAD(P)-dependent epimerase/dehydratase family. Dihydroflavonol-4-reductase subfamily.

This is an uncharacterized protein from Saccharomyces cerevisiae (strain ATCC 204508 / S288c) (Baker's yeast).